The chain runs to 190 residues: Ribose 1,5-bisphosphate phosphokinase PhnN (190 aa).

ATP is bound at residue 19 to 26 (GPSGVGKD).

It belongs to the ribose 1,5-bisphosphokinase family.

It catalyses the reaction alpha-D-ribose 1,5-bisphosphate + ATP = 5-phospho-alpha-D-ribose 1-diphosphate + ADP. It participates in metabolic intermediate biosynthesis; 5-phospho-alpha-D-ribose 1-diphosphate biosynthesis; 5-phospho-alpha-D-ribose 1-diphosphate from D-ribose 5-phosphate (route II): step 3/3. Catalyzes the phosphorylation of ribose 1,5-bisphosphate to 5-phospho-D-ribosyl alpha-1-diphosphate (PRPP). The chain is Ribose 1,5-bisphosphate phosphokinase PhnN from Ruegeria sp. (strain TM1040) (Silicibacter sp.).